Reading from the N-terminus, the 460-residue chain is Bifunctional protein GlmU (460 aa).

Residues 1–235 (MALSAAIILA…PLSVEGVNDR (235 aa)) are pyrophosphorylase. UDP-N-acetyl-alpha-D-glucosamine contacts are provided by residues 9-12 (LAAG), Lys23, Gln76, and 81-82 (GT). Asp109 contacts Mg(2+). UDP-N-acetyl-alpha-D-glucosamine-binding residues include Gly146, Glu161, Asn176, and Asn233. Residue Asn233 coordinates Mg(2+). The segment at 236–256 (VQLAALAKAHNKRVCEHWMRE) is linker. Residues 257 to 460 (GVTILDPDTT…VEGWKPEWER (204 aa)) form an N-acetyltransferase region. UDP-N-acetyl-alpha-D-glucosamine contacts are provided by Arg338 and Lys356. The active-site Proton acceptor is His368. Tyr371 and Asn382 together coordinate UDP-N-acetyl-alpha-D-glucosamine. Acetyl-CoA is bound by residues 391-392 (NY) and Ala428.

In the N-terminal section; belongs to the N-acetylglucosamine-1-phosphate uridyltransferase family. The protein in the C-terminal section; belongs to the transferase hexapeptide repeat family. As to quaternary structure, homotrimer. It depends on Mg(2+) as a cofactor.

The protein localises to the cytoplasm. The enzyme catalyses alpha-D-glucosamine 1-phosphate + acetyl-CoA = N-acetyl-alpha-D-glucosamine 1-phosphate + CoA + H(+). It catalyses the reaction N-acetyl-alpha-D-glucosamine 1-phosphate + UTP + H(+) = UDP-N-acetyl-alpha-D-glucosamine + diphosphate. It participates in nucleotide-sugar biosynthesis; UDP-N-acetyl-alpha-D-glucosamine biosynthesis; N-acetyl-alpha-D-glucosamine 1-phosphate from alpha-D-glucosamine 6-phosphate (route II): step 2/2. It functions in the pathway nucleotide-sugar biosynthesis; UDP-N-acetyl-alpha-D-glucosamine biosynthesis; UDP-N-acetyl-alpha-D-glucosamine from N-acetyl-alpha-D-glucosamine 1-phosphate: step 1/1. The protein operates within bacterial outer membrane biogenesis; LPS lipid A biosynthesis. Catalyzes the last two sequential reactions in the de novo biosynthetic pathway for UDP-N-acetylglucosamine (UDP-GlcNAc). The C-terminal domain catalyzes the transfer of acetyl group from acetyl coenzyme A to glucosamine-1-phosphate (GlcN-1-P) to produce N-acetylglucosamine-1-phosphate (GlcNAc-1-P), which is converted into UDP-GlcNAc by the transfer of uridine 5-monophosphate (from uridine 5-triphosphate), a reaction catalyzed by the N-terminal domain. This is Bifunctional protein GlmU from Bifidobacterium adolescentis (strain ATCC 15703 / DSM 20083 / NCTC 11814 / E194a).